The primary structure comprises 140 residues: Actin-depolymerizing factor 8 (140 aa).

Ser-6 carries the post-translational modification Phosphoserine. In terms of domain architecture, ADF-H spans 7 to 139 (GMHVNDECKI…SLDIIKGRLN (133 aa)).

Belongs to the actin-binding proteins ADF family. In terms of tissue distribution, expressed in the root trichoblast cells and developed root hairs.

Its subcellular location is the cytoplasm. It is found in the cytoskeleton. Actin-depolymerizing protein. Severs actin filaments (F-actin) and binds to actin monomers. The chain is Actin-depolymerizing factor 8 (ADF8) from Arabidopsis thaliana (Mouse-ear cress).